We begin with the raw amino-acid sequence, 205 residues long: dITP/XTP pyrophosphatase (205 aa).

Substrate is bound at residue 11–16 (TKNMGK). Mg(2+)-binding residues include Glu-44 and Asp-73. Residue Asp-73 is the Proton acceptor of the active site. Residues Ser-74, 158 to 161 (FGYD), Lys-181, and 186 to 187 (HR) each bind substrate.

This sequence belongs to the HAM1 NTPase family. As to quaternary structure, homodimer. The cofactor is Mg(2+).

It carries out the reaction XTP + H2O = XMP + diphosphate + H(+). It catalyses the reaction dITP + H2O = dIMP + diphosphate + H(+). The enzyme catalyses ITP + H2O = IMP + diphosphate + H(+). Its function is as follows. Pyrophosphatase that catalyzes the hydrolysis of nucleoside triphosphates to their monophosphate derivatives, with a high preference for the non-canonical purine nucleotides XTP (xanthosine triphosphate), dITP (deoxyinosine triphosphate) and ITP. Seems to function as a house-cleaning enzyme that removes non-canonical purine nucleotides from the nucleotide pool, thus preventing their incorporation into DNA/RNA and avoiding chromosomal lesions. This chain is dITP/XTP pyrophosphatase, found in Bacillus cereus (strain ATCC 14579 / DSM 31 / CCUG 7414 / JCM 2152 / NBRC 15305 / NCIMB 9373 / NCTC 2599 / NRRL B-3711).